The chain runs to 247 residues: 6-carboxyhexanoate--CoA ligase (247 aa).

The protein belongs to the BioW family. In terms of assembly, homodimer. Mg(2+) serves as cofactor.

It catalyses the reaction heptanedioate + ATP + CoA = 6-carboxyhexanoyl-CoA + AMP + diphosphate. Its pathway is metabolic intermediate metabolism; pimeloyl-CoA biosynthesis; pimeloyl-CoA from pimelate: step 1/1. Its function is as follows. Catalyzes the transformation of pimelate into pimeloyl-CoA with concomitant hydrolysis of ATP to AMP. This Corynebacterium diphtheriae (strain ATCC 700971 / NCTC 13129 / Biotype gravis) protein is 6-carboxyhexanoate--CoA ligase.